Consider the following 433-residue polypeptide: 5-methylthioadenosine/S-adenosylhomocysteine deaminase (433 aa).

Residues His-62 and His-64 each contribute to the Zn(2+) site. The substrate site is built by Glu-91, Arg-143, and His-183. Zn(2+) is bound at residue His-210. Positions 213 and 298 each coordinate substrate. Position 298 (Asp-298) interacts with Zn(2+).

The protein belongs to the metallo-dependent hydrolases superfamily. MTA/SAH deaminase family. Zn(2+) serves as cofactor.

It carries out the reaction S-adenosyl-L-homocysteine + H2O + H(+) = S-inosyl-L-homocysteine + NH4(+). It catalyses the reaction S-methyl-5'-thioadenosine + H2O + H(+) = S-methyl-5'-thioinosine + NH4(+). Catalyzes the deamination of 5-methylthioadenosine and S-adenosyl-L-homocysteine into 5-methylthioinosine and S-inosyl-L-homocysteine, respectively. Is also able to deaminate adenosine. The protein is 5-methylthioadenosine/S-adenosylhomocysteine deaminase of Caldanaerobacter subterraneus subsp. tengcongensis (strain DSM 15242 / JCM 11007 / NBRC 100824 / MB4) (Thermoanaerobacter tengcongensis).